The following is a 560-amino-acid chain: Exonuclease subunit 2 (560 aa).

36 to 43 (GRNGGGKS) is a binding site for ATP.

This sequence to phage T5 protein D13 and to yeast RAD52. Consists of two subunits: gp46 and gp47.

Functionally, exonuclease that plays a role in viral genome replication, DNA recombination, and host DNA degradation. This Enterobacteria phage T4 (Bacteriophage T4) protein is Exonuclease subunit 2 (46).